The following is an 884-amino-acid chain: Alanine--tRNA ligase (884 aa).

Positions 572, 576, 673, and 677 each coordinate Zn(2+).

The protein belongs to the class-II aminoacyl-tRNA synthetase family. Zn(2+) serves as cofactor.

Its subcellular location is the cytoplasm. The enzyme catalyses tRNA(Ala) + L-alanine + ATP = L-alanyl-tRNA(Ala) + AMP + diphosphate. Its function is as follows. Catalyzes the attachment of alanine to tRNA(Ala) in a two-step reaction: alanine is first activated by ATP to form Ala-AMP and then transferred to the acceptor end of tRNA(Ala). Also edits incorrectly charged Ser-tRNA(Ala) and Gly-tRNA(Ala) via its editing domain. This is Alanine--tRNA ligase from Xylella fastidiosa (strain 9a5c).